The primary structure comprises 202 residues: ATP-dependent Clp protease proteolytic subunit (202 aa).

The active-site Nucleophile is the S98. H123 is a catalytic residue.

This sequence belongs to the peptidase S14 family. In terms of assembly, fourteen ClpP subunits assemble into 2 heptameric rings which stack back to back to give a disk-like structure with a central cavity, resembling the structure of eukaryotic proteasomes.

It localises to the cytoplasm. It carries out the reaction Hydrolysis of proteins to small peptides in the presence of ATP and magnesium. alpha-casein is the usual test substrate. In the absence of ATP, only oligopeptides shorter than five residues are hydrolyzed (such as succinyl-Leu-Tyr-|-NHMec, and Leu-Tyr-Leu-|-Tyr-Trp, in which cleavage of the -Tyr-|-Leu- and -Tyr-|-Trp bonds also occurs).. Cleaves peptides in various proteins in a process that requires ATP hydrolysis. Has a chymotrypsin-like activity. Plays a major role in the degradation of misfolded proteins. This is ATP-dependent Clp protease proteolytic subunit from Desulfovibrio desulfuricans (strain ATCC 27774 / DSM 6949 / MB).